The following is a 239-amino-acid chain: Fatty acid metabolism regulator protein (239 aa).

Residues 6-74 (QSPAGFAEEY…HGKPTKVNNF (69 aa)) enclose the HTH gntR-type domain. A DNA-binding region (H-T-H motif) is located at residues 34-53 (ERELSELIGVTRTTLREVLQ).

In terms of assembly, homodimer.

It is found in the cytoplasm. In terms of biological role, multifunctional regulator of fatty acid metabolism. In Cronobacter sakazakii (strain ATCC BAA-894) (Enterobacter sakazakii), this protein is Fatty acid metabolism regulator protein.